A 485-amino-acid polypeptide reads, in one-letter code: Terminase, large subunit (485 aa).

Glutamine 97 and glutamine 99 together coordinate ATP. A Walker A motif motif is present at residues 124–131 (TSEFRGKS). Positions 145-150 (FVILDE) match the Walker B motif motif. Glutamate 150 (for ATPase activity) is an active-site residue. Residues 256–438 (SNSVFSGLDM…DIVMSLALAY (183 aa)) form a nuclease region. Mg(2+) is bound by residues aspartate 294, aspartate 347, and aspartate 429.

The protein belongs to the Tequatrovirus large terminase family. As to quaternary structure, interacts with the terminase small subunit; the active complex is probably heterooligomeric. Interacts with the portal protein. It depends on Mg(2+) as a cofactor.

Functionally, the terminase large subunit acts as an ATP driven molecular motor necessary for viral DNA translocation into empty capsids and as an endonuclease that cuts the viral genome to initiate and to end a packaging reaction The terminase lies at a unique vertex of the procapsid and is composed of two subunits, a small terminase subunit involved in viral DNA recognition (packaging sequence), and a large terminase subunit possessing endonucleolytic and ATPase activities. Both terminase subunits heterooligomerize and are docked on the portal protein to form the packaging machine. The terminase large subunit exhibits endonuclease activity and cleaves the viral genome concatemer. Once the capsid is packaged with the DNA, the terminase complex is substituted by the tail. This is Terminase, large subunit from Thermus thermophilus (Thermus thermophilus phage G20c).